The chain runs to 179 residues: Large ribosomal subunit protein uL5 (179 aa).

The protein belongs to the universal ribosomal protein uL5 family. In terms of assembly, part of the 50S ribosomal subunit; part of the 5S rRNA/L5/L18/L25 subcomplex. Contacts the 5S rRNA and the P site tRNA. Forms a bridge to the 30S subunit in the 70S ribosome.

Functionally, this is one of the proteins that bind and probably mediate the attachment of the 5S RNA into the large ribosomal subunit, where it forms part of the central protuberance. In the 70S ribosome it contacts protein S13 of the 30S subunit (bridge B1b), connecting the 2 subunits; this bridge is implicated in subunit movement. Contacts the P site tRNA; the 5S rRNA and some of its associated proteins might help stabilize positioning of ribosome-bound tRNAs. The chain is Large ribosomal subunit protein uL5 from Shewanella baltica (strain OS223).